Here is a 195-residue protein sequence, read N- to C-terminus: ATP-dependent Clp protease proteolytic subunit (195 aa).

Residue serine 99 is the Nucleophile of the active site. Histidine 124 is an active-site residue.

It belongs to the peptidase S14 family. As to quaternary structure, fourteen ClpP subunits assemble into 2 heptameric rings which stack back to back to give a disk-like structure with a central cavity, resembling the structure of eukaryotic proteasomes.

It is found in the cytoplasm. The catalysed reaction is Hydrolysis of proteins to small peptides in the presence of ATP and magnesium. alpha-casein is the usual test substrate. In the absence of ATP, only oligopeptides shorter than five residues are hydrolyzed (such as succinyl-Leu-Tyr-|-NHMec, and Leu-Tyr-Leu-|-Tyr-Trp, in which cleavage of the -Tyr-|-Leu- and -Tyr-|-Trp bonds also occurs).. Cleaves peptides in various proteins in a process that requires ATP hydrolysis. Has a chymotrypsin-like activity. Plays a major role in the degradation of misfolded proteins. The protein is ATP-dependent Clp protease proteolytic subunit of Desulforamulus reducens (strain ATCC BAA-1160 / DSM 100696 / MI-1) (Desulfotomaculum reducens).